The chain runs to 317 residues: Beta-ketoacyl-[acyl-carrier-protein] synthase III (317 aa).

Active-site residues include Cys-112 and His-244. The interval 245 to 249 is ACP-binding; that stretch reads QANVR. The active site involves Asn-274.

Belongs to the thiolase-like superfamily. FabH family. As to quaternary structure, homodimer.

The protein resides in the cytoplasm. It carries out the reaction malonyl-[ACP] + acetyl-CoA + H(+) = 3-oxobutanoyl-[ACP] + CO2 + CoA. Its pathway is lipid metabolism; fatty acid biosynthesis. Catalyzes the condensation reaction of fatty acid synthesis by the addition to an acyl acceptor of two carbons from malonyl-ACP. Catalyzes the first condensation reaction which initiates fatty acid synthesis and may therefore play a role in governing the total rate of fatty acid production. Possesses both acetoacetyl-ACP synthase and acetyl transacylase activities. Its substrate specificity determines the biosynthesis of branched-chain and/or straight-chain of fatty acids. This is Beta-ketoacyl-[acyl-carrier-protein] synthase III from Rickettsia canadensis (strain McKiel).